The primary structure comprises 550 residues: Hydroxylamine reductase (550 aa).

C3, C6, C18, and C25 together coordinate [2Fe-2S] cluster. Positions 249, 273, 317, 405, 433, 458, 492, and 494 each coordinate hybrid [4Fe-2O-2S] cluster. C405 carries the cysteine persulfide modification.

The protein belongs to the HCP family. Requires [2Fe-2S] cluster as cofactor. It depends on hybrid [4Fe-2O-2S] cluster as a cofactor.

The protein resides in the cytoplasm. It carries out the reaction A + NH4(+) + H2O = hydroxylamine + AH2 + H(+). Its activity is regulated as follows. Inhibited by oxygen. Activated by cyanide except in the prolonged presence of excess cyanide, where the enzyme is inactivated. Catalyzes the reduction of hydroxylamine to form NH(3) and H(2)O. Is also able to reduce hydroxylamine analogs such as methylhydroxylamine and hydroxyquinone. Might have a role as a scavenger of potentially toxic by-products of nitrate metabolism. The protein is Hydroxylamine reductase of Escherichia coli (strain K12).